Reading from the N-terminus, the 317-residue chain is NAD kinase (317 aa).

Residue aspartate 82 is the Proton acceptor of the active site. Residues 82-83, arginine 87, 157-158, aspartate 187, and 198-203 each bind NAD(+); these read DG, NE, and TAYAFS.

The protein belongs to the NAD kinase family. The cofactor is a divalent metal cation.

It localises to the cytoplasm. It carries out the reaction NAD(+) + ATP = ADP + NADP(+) + H(+). In terms of biological role, involved in the regulation of the intracellular balance of NAD and NADP, and is a key enzyme in the biosynthesis of NADP. Catalyzes specifically the phosphorylation on 2'-hydroxyl of the adenosine moiety of NAD to yield NADP. This Corynebacterium diphtheriae (strain ATCC 700971 / NCTC 13129 / Biotype gravis) protein is NAD kinase.